The sequence spans 1682 residues: Collagen alpha-4(IV) chain (1682 aa).

Positions 1–32 (MRCFFRWTKSFVTAPWSLIFILFTIQYEYGSG) are cleaved as a signal peptide. Residues 31 to 56 (SGKKYGGPCGGRNCSVCQCFPEKGSR) are 7S domain. An N-linked (GlcNAc...) asparagine glycan is attached at N43. Disordered stretches follow at residues 56-255 (RGHP…VQPP) and 379-1453 (PGPP…FGPG). Residues 57 to 1451 (GHPGPLGPQG…TGDPGPKGFG (1395 aa)) are triple-helical region. Positions 86-88 (RGD) match the Cell attachment site motif. A compositionally biased stretch (low complexity) spans 103 to 116 (PTGVPGFPGVDGVP). N134 is a glycosylation site (N-linked (GlcNAc...) asparagine). 2 consecutive short sequence motifs (cell attachment site) follow at residues 137–139 (RGD) and 181–183 (RGD). The segment covering 396 to 410 (MGPPGPPGVPGPPGF) has biased composition (pro residues). Positions 411 to 426 (PGEAGVPGRLDCAPGK) are enriched in low complexity. Residues 487-500 (PPGPMGPPGPPGPP) are compositionally biased toward pro residues. Positions 578–601 (DGGDGRPGERGDPGPRGDHKDAAP) are enriched in basic and acidic residues. 2 consecutive short sequence motifs (cell attachment site) follow at residues 587 to 589 (RGD) and 593 to 595 (RGD). Residues 609 to 621 (LPGPPGRTGPEGP) are compositionally biased toward pro residues. Residues 632–647 (QRGLPGEPGRPGTRGF) show a composition bias toward low complexity. N-linked (GlcNAc...) asparagine glycosylation is present at N661. A compositionally biased stretch (low complexity) spans 665–682 (PGKPGLPGLDGPPGLKGF). Residues 716 to 718 (RGD) carry the Cell attachment site motif. Low complexity-rich tracts occupy residues 742–758 (PGKD…AFGD) and 857–902 (PAGM…LPGL). Basic and acidic residues-rich tracts occupy residues 911-929 (ERGK…EVGE) and 938-950 (DLGE…DRGL). Gly residues predominate over residues 969–978 (GPPGDGGFSG). Short sequence motifs (cell attachment site) lie at residues 980–982 (RGD) and 992–994 (RGD). Positions 998–1010 (DGLPGLHRGQPGI) are enriched in low complexity. Pro residues predominate over residues 1011–1025 (DGPPGPPGPPGPPGS). Residues 1034–1044 (FPGFPGDQGDP) show a composition bias toward low complexity. A Cell attachment site motif is present at residues 1144–1146 (RGD). 5 stretches are compositionally biased toward pro residues: residues 1223-1235 (PGPP…PGPA), 1248-1272 (DPGP…PPGS), 1289-1304 (PGPP…PGCQ), 1340-1351 (PGPPGRKGPVGP), and 1435-1444 (APGPPGPTGD). Residues 1457–1682 (GFLLVLHSQT…SRCQVCMKHS (226 aa)) form the Collagen IV NC1 domain. Cystine bridges form between C1472/C1561, C1505/C1558, C1517/C1523, C1580/C1678, C1614/C1675, and C1626/C1633.

It belongs to the type IV collagen family. There are six type IV collagen isoforms, alpha 1(IV)-alpha 6(IV), each of which can form a triple helix structure with 2 other chains to generate type IV collagen network. The alpha 3(IV) chain forms a triple helical protomer with alpha 4(IV) and alpha 5(IV); this triple helical structure dimerizes through NC1-NC1 domain interactions such that the alpha 3(IV), alpha 4(IV) and alpha 5(IV) chains of one protomer connect with the alpha 5(IV), alpha 4(IV) and alpha 3(IV) chains of the opposite protomer, respectively. Associates with LAMB2 at the neuromuscular junction and in GBM. In terms of processing, prolines at the third position of the tripeptide repeating unit (G-X-Y) are hydroxylated in some or all of the chains. Post-translationally, type IV collagens contain numerous cysteine residues which are involved in inter- and intramolecular disulfide bonding. 12 of these, located in the NC1 domain, are conserved in all known type IV collagens. The trimeric structure of the NC1 domains is stabilized by covalent bonds between Lys and Met residues. Expressed in Bruch's membrane, outer plexiform layer, inner nuclear layer, inner plexiform layer, ganglion cell layer, inner limiting membrane and around the blood vessels of the retina (at protein level). Highly expressed in kidney and lung. Detected at lower levels in heart, muscle and skin.

It is found in the secreted. Its subcellular location is the extracellular space. The protein resides in the extracellular matrix. The protein localises to the basement membrane. In terms of biological role, type IV collagen is the major structural component of glomerular basement membranes (GBM), forming a 'chicken-wire' meshwork together with laminins, proteoglycans and entactin/nidogen. The protein is Collagen alpha-4(IV) chain of Mus musculus (Mouse).